The sequence spans 389 residues: Glutaryl-CoA dehydrogenase (389 aa).

Substrate contacts are provided by Arg-87 and Asn-91. Residues 126–129 (FGIT), Ser-135, and 159–161 (WIS) each bind FAD. Position 135 (Ser-135) interacts with substrate. Residue Ser-181 participates in substrate binding. FAD-binding positions include Arg-271, 281–284 (FQMN), Arg-340, Ala-344, and 367–371 (EGSAN). Residue Glu-367 is the Proton acceptor of the active site. Substrate is bound at residue Arg-385.

This sequence belongs to the acyl-CoA dehydrogenase family. As to quaternary structure, homotetramer. FAD serves as cofactor.

The enzyme catalyses glutaryl-CoA + A = (2E)-glutaconyl-CoA + AH2. Its pathway is aromatic compound metabolism; benzoyl-CoA degradation. Inhibited by glutaconyl-CoA. In terms of biological role, catalyzes the dehydrogenation of Glutaryl-CoA to glutaconyl-CoA. This chain is Glutaryl-CoA dehydrogenase (Acd), found in Desulfococcus multivorans.